Consider the following 127-residue polypeptide: MLQLLLAVFIGGGTGSVARWFLSMRFNPMHQAIPLGTLTANLIGAFIIGVGLAWFNRMTHIDPMWKLLITTGFCGGLTTFSTFSAEVVFLLQDGRINWALANIAVNMLGSFAMTALAFWLFSAASAH.

Helical transmembrane passes span 4–24 (LLLA…FLSM), 35–55 (LGTL…LAWF), 71–91 (TGFC…VFLL), and 103–123 (IAVN…LFSA). Residues G75 and T78 each contribute to the Na(+) site.

This sequence belongs to the fluoride channel Fluc/FEX (TC 1.A.43) family.

The protein localises to the cell inner membrane. The catalysed reaction is fluoride(in) = fluoride(out). With respect to regulation, na(+) is not transported, but it plays an essential structural role and its presence is essential for fluoride channel function. In terms of biological role, fluoride-specific ion channel. Important for reducing fluoride concentration in the cell, thus reducing its toxicity. The protein is Fluoride-specific ion channel FluC of Enterobacter sp. (strain 638).